The primary structure comprises 86 residues: Allergen Hum j 3 (86 aa).

This Humulus japonicus (Japanese hop) protein is Allergen Hum j 3.